Here is a 75-residue protein sequence, read N- to C-terminus: UPF0235 protein Ava_3894 (75 aa).

The interval 1–32 (MQKKVKVKPNSKQQKIAEQDDGSLTVHLKSPP) is disordered.

This sequence belongs to the UPF0235 family.

The protein is UPF0235 protein Ava_3894 of Trichormus variabilis (strain ATCC 29413 / PCC 7937) (Anabaena variabilis).